The chain runs to 356 residues: Glutamine synthetase PR-2 (356 aa).

In terms of domain architecture, GS beta-grasp spans Ile-19 to Gly-99. Residues Ala-37–Asp-66 are disordered. In terms of domain architecture, GS catalytic spans Lys-106 to Pro-356.

It belongs to the glutamine synthetase family. In terms of assembly, homooctamer. In terms of tissue distribution, roots.

It localises to the cytoplasm. It catalyses the reaction L-glutamate + NH4(+) + ATP = L-glutamine + ADP + phosphate + H(+). This Phaseolus vulgaris (Kidney bean) protein is Glutamine synthetase PR-2.